The chain runs to 338 residues: Formamidase (338 aa).

The CN hydrolase domain maps to 15-257 (VVIGLAQLAL…DEIVCCELRP (243 aa)). Glu-61 (proton acceptor) is an active-site residue. The active-site Proton donor is Lys-130. Catalysis depends on Cys-163, which acts as the Nucleophile.

Belongs to the carbon-nitrogen hydrolase superfamily. Aliphatic amidase family.

It carries out the reaction formamide + H2O = formate + NH4(+). Functionally, is an aliphatic amidase with a restricted substrate specificity, as it only hydrolyzes formamide. The chain is Formamidase from Pseudomonas syringae pv. tomato (strain ATCC BAA-871 / DC3000).